The primary structure comprises 643 residues: 1-deoxy-D-xylulose-5-phosphate synthase (643 aa).

Thiamine diphosphate is bound by residues His-78 and 119–121 (AHS). Asp-150 is a Mg(2+) binding site. Residues 151 to 152 (GS), Asn-179, Tyr-288, and Glu-370 each bind thiamine diphosphate. Asn-179 contacts Mg(2+).

It belongs to the transketolase family. DXPS subfamily. In terms of assembly, homodimer. Mg(2+) is required as a cofactor. Requires thiamine diphosphate as cofactor.

The enzyme catalyses D-glyceraldehyde 3-phosphate + pyruvate + H(+) = 1-deoxy-D-xylulose 5-phosphate + CO2. The protein operates within metabolic intermediate biosynthesis; 1-deoxy-D-xylulose 5-phosphate biosynthesis; 1-deoxy-D-xylulose 5-phosphate from D-glyceraldehyde 3-phosphate and pyruvate: step 1/1. In terms of biological role, catalyzes the acyloin condensation reaction between C atoms 2 and 3 of pyruvate and glyceraldehyde 3-phosphate to yield 1-deoxy-D-xylulose-5-phosphate (DXP). The sequence is that of 1-deoxy-D-xylulose-5-phosphate synthase from Brucella canis (strain ATCC 23365 / NCTC 10854 / RM-666).